The sequence spans 416 residues: Beta sliding clamp (416 aa).

This sequence belongs to the beta sliding clamp family. In terms of assembly, forms a ring-shaped head-to-tail homodimer around DNA which binds and tethers DNA polymerases and other proteins to the DNA. The DNA replisome complex has a single clamp-loading complex (3 tau and 1 each of delta, delta', psi and chi subunits) which binds 3 Pol III cores (1 core on the leading strand and 2 on the lagging strand) each with a beta sliding clamp dimer. Additional proteins in the replisome are other copies of gamma, psi and chi, Ssb, DNA helicase and RNA primase.

The protein resides in the cytoplasm. Its function is as follows. Confers DNA tethering and processivity to DNA polymerases and other proteins. Acts as a clamp, forming a ring around DNA (a reaction catalyzed by the clamp-loading complex) which diffuses in an ATP-independent manner freely and bidirectionally along dsDNA. Initially characterized for its ability to contact the catalytic subunit of DNA polymerase III (Pol III), a complex, multichain enzyme responsible for most of the replicative synthesis in bacteria; Pol III exhibits 3'-5' exonuclease proofreading activity. The beta chain is required for initiation of replication as well as for processivity of DNA replication. In Chlamydia trachomatis serovar D (strain ATCC VR-885 / DSM 19411 / UW-3/Cx), this protein is Beta sliding clamp (dnaN).